Reading from the N-terminus, the 355-residue chain is Uroporphyrinogen decarboxylase (355 aa).

Substrate is bound by residues 36–40 (RQAGR), Asp-85, Tyr-160, Ser-215, and His-334.

It belongs to the uroporphyrinogen decarboxylase family. In terms of assembly, homodimer.

The protein resides in the cytoplasm. The enzyme catalyses uroporphyrinogen III + 4 H(+) = coproporphyrinogen III + 4 CO2. It functions in the pathway porphyrin-containing compound metabolism; protoporphyrin-IX biosynthesis; coproporphyrinogen-III from 5-aminolevulinate: step 4/4. Catalyzes the decarboxylation of four acetate groups of uroporphyrinogen-III to yield coproporphyrinogen-III. In Rhodococcus opacus (strain B4), this protein is Uroporphyrinogen decarboxylase.